The sequence spans 862 residues: DNA mismatch repair protein MutS (862 aa).

603-610 (GPNMSGKS) is an ATP binding site.

This sequence belongs to the DNA mismatch repair MutS family.

In terms of biological role, this protein is involved in the repair of mismatches in DNA. It is possible that it carries out the mismatch recognition step. This protein has a weak ATPase activity. This Bacillus velezensis (strain DSM 23117 / BGSC 10A6 / LMG 26770 / FZB42) (Bacillus amyloliquefaciens subsp. plantarum) protein is DNA mismatch repair protein MutS.